We begin with the raw amino-acid sequence, 464 residues long: MKYLPLFHNLRGSRVLVVGGGEIALRKSRLLADAGALLRVVAPEIEAQLRELVAASGGECLLRGYAEADLDGCGLIIAATDDEALNAHVSADAHRRCVPVNVVDAPALCSVIFPAIVDRSPLIIAVSSGGDAPVLARLIRAKIETWIPSTYGHLAGLAARFRDQVKGLFPDVQQRRGFWEDVFQGPIADRQLAGQGAEAERLLQAKIDGEAMVTTGEVYLVGAGPGDPDLLTFRALRLMQQADVVLYDRLVAPAILELCRRDAERVYVGKRRADHAVPQDQINQQLVDLAKAGKRVVRLKGGDPFIFGRGGEEIEELAAHGIPFQVVPGITAASGCAAYAGIPLTHRDYAQSVRFVTGHLKDGSTDLPWSDLVAPAQTLVFYMGLVGLPIICEQLIKHGRAAETPAALIQQGTTVNQRVFTGTLADLPRLVAEHEVHAPTLVIVGEVVQLREKLAWFEGAQGQI.

The interval 1-203 (MKYLPLFHNL…GQGAEAERLL (203 aa)) is precorrin-2 dehydrogenase /sirohydrochlorin ferrochelatase. Residues 22 to 23 (EI) and 43 to 44 (PE) contribute to the NAD(+) site. Ser-128 bears the Phosphoserine mark. The uroporphyrinogen-III C-methyltransferase stretch occupies residues 216–464 (GEVYLVGAGP…AWFEGAQGQI (249 aa)). An S-adenosyl-L-methionine-binding site is contributed by Pro-225. Asp-248 functions as the Proton acceptor in the catalytic mechanism. Lys-270 functions as the Proton donor in the catalytic mechanism. Residues 301 to 303 (GGD), Ile-306, 331 to 332 (TA), Met-383, and Gly-412 each bind S-adenosyl-L-methionine.

In the N-terminal section; belongs to the precorrin-2 dehydrogenase / sirohydrochlorin ferrochelatase family. This sequence in the C-terminal section; belongs to the precorrin methyltransferase family.

The enzyme catalyses uroporphyrinogen III + 2 S-adenosyl-L-methionine = precorrin-2 + 2 S-adenosyl-L-homocysteine + H(+). The catalysed reaction is precorrin-2 + NAD(+) = sirohydrochlorin + NADH + 2 H(+). It carries out the reaction siroheme + 2 H(+) = sirohydrochlorin + Fe(2+). It functions in the pathway cofactor biosynthesis; adenosylcobalamin biosynthesis; precorrin-2 from uroporphyrinogen III: step 1/1. The protein operates within cofactor biosynthesis; adenosylcobalamin biosynthesis; sirohydrochlorin from precorrin-2: step 1/1. Its pathway is porphyrin-containing compound metabolism; siroheme biosynthesis; precorrin-2 from uroporphyrinogen III: step 1/1. It participates in porphyrin-containing compound metabolism; siroheme biosynthesis; siroheme from sirohydrochlorin: step 1/1. It functions in the pathway porphyrin-containing compound metabolism; siroheme biosynthesis; sirohydrochlorin from precorrin-2: step 1/1. Functionally, multifunctional enzyme that catalyzes the SAM-dependent methylations of uroporphyrinogen III at position C-2 and C-7 to form precorrin-2 via precorrin-1. Then it catalyzes the NAD-dependent ring dehydrogenation of precorrin-2 to yield sirohydrochlorin. Finally, it catalyzes the ferrochelation of sirohydrochlorin to yield siroheme. The sequence is that of Siroheme synthase from Pseudomonas fluorescens (strain Pf0-1).